The chain runs to 241 residues: Small ribosomal subunit protein uS3 (241 aa).

One can recognise a KH type-2 domain in the interval 22 to 91 (VDEYLAYKFH…NPQVTVVKVE (70 aa)). Positions 218 to 241 (EMQQTQPEAPTLEETVEQSGGETQ) are disordered.

The protein belongs to the universal ribosomal protein uS3 family. Part of the 30S ribosomal subunit.

Binds the lower part of the 30S subunit head. In Ignicoccus hospitalis (strain KIN4/I / DSM 18386 / JCM 14125), this protein is Small ribosomal subunit protein uS3.